The primary structure comprises 203 residues: uncharacterized protein (203 aa).

The chain crosses the membrane as a helical span at residues 171–191 (VGYLSIWLKEYWYLVVLFVLI).

The protein localises to the membrane. This is an uncharacterized protein from Methanocaldococcus jannaschii (strain ATCC 43067 / DSM 2661 / JAL-1 / JCM 10045 / NBRC 100440) (Methanococcus jannaschii).